Here is a 760-residue protein sequence, read N- to C-terminus: Semaphorin-4A (760 aa).

An N-terminal signal peptide occupies residues 1-32 (MALPSLGQDSWSLLRVFFFQLFLLPSLPPASG). Residues 33 to 682 (TGGQGPMPRV…MAAQRSYWPH (650 aa)) are Extracellular-facing. One can recognise a Sema domain in the interval 36 to 494 (QGPMPRVKYH…FSGGIWRVPR (459 aa)). Cysteines 113 and 124 form a disulfide. N-linked (GlcNAc...) asparagine glycosylation is found at Asn-120 and Asn-135. Intrachain disulfides connect Cys-142–Cys-151, Cys-269–Cys-379, and Cys-293–Cys-339. Residue Asn-496 is glycosylated (N-linked (GlcNAc...) asparagine). A PSI domain is found at 496 to 547 (NCSVYESCVDCVLARDPHCAWDPESRLCSLLSGSTKPWKQDMERGNPEWVCT). 3 cysteine pairs are disulfide-bonded: Cys-497–Cys-514, Cys-506–Cys-523, and Cys-579–Cys-623. Positions 572-630 (NSILELPCPHLSALASYHWSHGRAKISEASATVYNGSLLLLPQDGVGGLYQCVATENGY) constitute an Ig-like C2-type domain. N-linked (GlcNAc...) asparagine glycosylation occurs at Asn-606. The helical transmembrane segment at 683 to 703 (FLIVTVLLAIVLLGVLTLLLA) threads the bilayer. The Cytoplasmic segment spans residues 704 to 760 (SPLGALRARGKVQGCGMLPPREKAPLSRDQHLQPSKDHRTSASDVDADNNHLGAEVA). A disordered region spans residues 720–760 (MLPPREKAPLSRDQHLQPSKDHRTSASDVDADNNHLGAEVA). Basic and acidic residues predominate over residues 723 to 744 (PREKAPLSRDQHLQPSKDHRTS).

The protein belongs to the semaphorin family. As to quaternary structure, interacts with PLXNB1, PLXNB2 and PLXNB3. Interacts with PLXND1. Interacts with TIMD2. In terms of tissue distribution, expressed in neurons and glia in the developing hippocampus.

It localises to the cell membrane. Functionally, cell surface receptor for PLXNB1, PLXNB2, PLXNB3 and PLXND1 that plays an important role in cell-cell signaling. Regulates glutamatergic and GABAergic synapse development. Promotes the development of inhibitory synapses in a PLXNB1-dependent manner and promotes the development of excitatory synapses in a PLXNB2-dependent manner. Plays a role in priming antigen-specific T-cells, promotes differentiation of Th1 T-helper cells, and thereby contributes to adaptive immunity. Promotes phosphorylation of TIMD2. Inhibits angiogenesis. Promotes axon growth cone collapse. Inhibits axonal extension by providing local signals to specify territories inaccessible for growing axons. This Mus musculus (Mouse) protein is Semaphorin-4A (Sema4a).